A 125-amino-acid chain; its full sequence is Calcitonin receptor-stimulating peptide 3 (125 aa).

The first 25 residues, 1 to 25, serve as a signal peptide directing secretion; that stretch reads MGFWKFPPFLILSILVLYQAGMLHA. The propeptide occupies 26 to 79; the sequence is APFRMALGSSFDSATLTEEEMSLLLVAMVKDYVQMKATVLEQETEDFSITTQER. C81 and C86 form a disulfide bridge. L116 carries the post-translational modification Leucine amide. A propeptide spanning residues 122-125 is cleaved from the precursor; the sequence is QPQA.

This sequence belongs to the calcitonin family. As to expression, mainly expressed in the thyroid gland and CNS. Found in the nerve cells of cerebrum, hippocampus, hypothalamus, pons/midbrain and thalamus.

The protein localises to the secreted. The sequence is that of Calcitonin receptor-stimulating peptide 3 (CRSP3) from Sus scrofa (Pig).